The primary structure comprises 205 residues: N-(5'-phosphoribosyl)anthranilate isomerase (205 aa).

Belongs to the TrpF family.

It carries out the reaction N-(5-phospho-beta-D-ribosyl)anthranilate = 1-(2-carboxyphenylamino)-1-deoxy-D-ribulose 5-phosphate. It participates in amino-acid biosynthesis; L-tryptophan biosynthesis; L-tryptophan from chorismate: step 3/5. This is N-(5'-phosphoribosyl)anthranilate isomerase from Clostridium acetobutylicum (strain ATCC 824 / DSM 792 / JCM 1419 / IAM 19013 / LMG 5710 / NBRC 13948 / NRRL B-527 / VKM B-1787 / 2291 / W).